The following is a 110-amino-acid chain: Large ribosomal subunit protein uL22 (110 aa).

It belongs to the universal ribosomal protein uL22 family. Part of the 50S ribosomal subunit.

Functionally, this protein binds specifically to 23S rRNA; its binding is stimulated by other ribosomal proteins, e.g. L4, L17, and L20. It is important during the early stages of 50S assembly. It makes multiple contacts with different domains of the 23S rRNA in the assembled 50S subunit and ribosome. The globular domain of the protein is located near the polypeptide exit tunnel on the outside of the subunit, while an extended beta-hairpin is found that lines the wall of the exit tunnel in the center of the 70S ribosome. In Citrobacter koseri (strain ATCC BAA-895 / CDC 4225-83 / SGSC4696), this protein is Large ribosomal subunit protein uL22.